We begin with the raw amino-acid sequence, 837 residues long: MAGLLKKIFESGKKDVKYLERKADEIIALADETAALSDDALREKTVEFKERVQKGETLDDLLVEAFAVAREGAKRALGLYPFKVQLMGGIVLHEGNIAEMKTGEGKTLTATLPVYLNALSGEGVHVVTVNEYLAHRDAEEMGVLYNFLGLSVGLNLNALSSTEKREAYACDITYSTNNELGFDYLRDNMVVYKEEMVQRPLAFAVIDEVDSILVDEARTPLIISGEAEKSTILYVRANTFVRTLTEEEDYTVDIKTKSVQLTEDGMTKGENYFDVENLFDLENTVILHHIAQALKANYTMSLDVDYVVQDDEVLIVDQFTGRIMKGRRFSEGLHQALEAKEGVTIQNESKTMATITFQNYFRMYKKLAGMTGTAKTEEEEFRDIYNMRVIEIPTNKVIIRDDRPDLIYTTIEAKFNAVVEDIAERHAKGQPVLVGTVAIETSELISSKLKRKGIKHDVLNAKQHEREADIIKHAGERGAVVIATNMAGRGTDIKLGEGTIEAGGLAVIGTERHESRRIDNQLRGRSGRQGDPGVTQFYLSMEDELMRRFGSDNMKSMMERFGMAEDAIQSKMVSRAVESAQRRVEGNNFDSRKQVLQYDDVLRQQREVIYKQRYEVINAENSLREIIEQMIQRTVNFIVSSNASSHEPEEAWNLQGIIDYVDANLLPEGTITLEDLQNRTSEDIQNLILDKIKAAYDEKETLLPPEEFNEFEKVVLLRVVDTKWVDHIDAMDHLRDGIHLRAYGQIDPLREYQSEGFEMFEAMVSSIDEDVARYIMKAEIRQNLEREQVAKGEAINPAEGKPEAKRQPIRKDQHIGRNDPCPCGSGKKYKNCHGKEA.

ATP contacts are provided by residues Gln85, 103 to 107 (GEGKT), and Asp492. The tract at residues 791–837 (KGEAINPAEGKPEAKRQPIRKDQHIGRNDPCPCGSGKKYKNCHGKEA) is disordered. A compositionally biased stretch (basic and acidic residues) spans 800-817 (GKPEAKRQPIRKDQHIGR). The Zn(2+) site is built by Cys821, Cys823, Cys832, and His833. The span at 827–837 (KKYKNCHGKEA) shows a compositional bias: basic residues.

It belongs to the SecA family. In terms of assembly, monomer and homodimer. Part of the essential Sec protein translocation apparatus which comprises SecA, SecYEG and auxiliary proteins SecDF. Other proteins may also be involved. Requires Zn(2+) as cofactor.

The protein localises to the cell membrane. It is found in the cytoplasm. The enzyme catalyses ATP + H2O + cellular proteinSide 1 = ADP + phosphate + cellular proteinSide 2.. In terms of biological role, part of the Sec protein translocase complex. Interacts with the SecYEG preprotein conducting channel. Has a central role in coupling the hydrolysis of ATP to the transfer of proteins into and across the cell membrane, serving as an ATP-driven molecular motor driving the stepwise translocation of polypeptide chains across the membrane. The protein is Protein translocase subunit SecA 1 of Listeria monocytogenes serovar 1/2a (strain ATCC BAA-679 / EGD-e).